Reading from the N-terminus, the 147-residue chain is Large ribosomal subunit protein bL9 (147 aa).

Belongs to the bacterial ribosomal protein bL9 family.

Its function is as follows. Binds to the 23S rRNA. The protein is Large ribosomal subunit protein bL9 of Clostridium botulinum (strain 657 / Type Ba4).